A 1398-amino-acid polypeptide reads, in one-letter code: Disease resistance protein RPV1 (1398 aa).

The TIR domain maps to 22–185; the sequence is TTYDVFLSFR…EITNSIFRQL (164 aa). NAD(+) contacts are provided by residues 31–36 and Gly63; that span reads RGEDTR. The active site involves Glu97. Residues 201–440 enclose the NB-ARC domain; the sequence is SHVKEMILRL…KRSYDGLDRI (240 aa). LRR repeat units lie at residues 203-225, 423-447, 478-504, 535-560, 610-632, 633-657, 678-702, 703-726, 728-750, 751-773, 775-797, 798-820, 822-844, 845-867, 869-891, 892-914, 916-938, 939-961, 963-985, 986-1008, 1010-1032, 1033-1055, 1079-1102, and 1105-1128; these read VKEM…IYGV, KADI…IFLD, LNDL…GWEI, IKSV…VFAK, SYEL…NFDG, GKLV…DLER, MPNL…VGNM, KKLT…IGDL, SLES…GGNM, KSLT…IGDL, SLEI…GGNM, KSLK…IGDL, SLKY…GGNM, KRLL…IGDL, KSLL…IGDL, MKSL…IGDL, and LEML…AIDA. Residues 1315–1328 are compositionally biased toward polar residues; sequence QNSGDNGSALQDAN. Residues 1315–1336 form a disordered region; the sequence is QNSGDNGSALQDANGNVHGANQ. The LRR 25 repeat unit spans residues 1346–1369; that stretch reads LDLLRNLSLGDNGSVVLEDTLGNR. Positions 1369–1373 match the Nuclear localization signal motif; sequence RKRRR.

This sequence belongs to the disease resistance TIR-NB-LRR family. As to quaternary structure, homodimer; homodimerization is required for NAD(+) hydrolase (NADase) activity.

It localises to the nucleus. It is found in the cytoplasm. It carries out the reaction NAD(+) + H2O = ADP-D-ribose + nicotinamide + H(+). In terms of biological role, disease resistance (R) protein that confers resistance to multiple powdery and downy mildew by promoting cell death. Acts as a NAD(+) hydrolase (NADase): in response to activation, catalyzes cleavage of NAD(+) into ADP-D-ribose (ADPR) and nicotinamide; NAD(+) cleavage triggering a defense system that promotes cell death. The protein is Disease resistance protein RPV1 of Vitis rotundifolia (Muscadine grape).